Consider the following 533-residue polypeptide: Sterol 26-hydroxylase, mitochondrial (533 aa).

A mitochondrion-targeting transit peptide spans 1–32 (MAVLSRMRLRWALLDTRVMGHGLCPQGARAKA). Residues 38 to 58 (LRDHESTEGPGTGQDRPRLRS) are disordered. K142 and K375 each carry N6-acetyllysine. The sterol-binding stretch occupies residues 386 to 400 (PLLKAVIKETLRLYP). C479 lines the heme pocket. Residues K512 and K523 each carry the N6-acetyllysine modification.

It belongs to the cytochrome P450 family. As to quaternary structure, interacts with HSP70; this interaction is required for initial targeting to mitochondria. It depends on heme as a cofactor. As to expression, expressed in liver, kidney and ovary.

Its subcellular location is the mitochondrion inner membrane. It catalyses the reaction 5beta-cholestane-3alpha,7alpha,12alpha-triol + 6 reduced [adrenodoxin] + 3 O2 + 5 H(+) = (25R)-3alpha,7alpha,12alpha-trihydroxy-5beta-cholestan-26-oate + 6 oxidized [adrenodoxin] + 4 H2O. It carries out the reaction cholestanol + 2 reduced [adrenodoxin] + O2 + 2 H(+) = (25R)-26-hydroxycholestanol + 2 oxidized [adrenodoxin] + H2O. The enzyme catalyses (25R)-3beta-hydroxycholest-5-en-7-one-26-al + 2 reduced [adrenodoxin] + O2 + H(+) = (25R)-3beta-hydroxycholest-5-en-7-one-26-oate + 2 oxidized [adrenodoxin] + H2O. The catalysed reaction is (25R)-3beta,26-dihydroxycholest-5-en-7-one + 2 reduced [adrenodoxin] + O2 + 2 H(+) = (25R)-3beta-hydroxycholest-5-en-7-one-26-al + 2 oxidized [adrenodoxin] + 2 H2O. It catalyses the reaction 7-oxocholesterol + 2 reduced [adrenodoxin] + O2 + 2 H(+) = (25R)-3beta,26-dihydroxycholest-5-en-7-one + 2 oxidized [adrenodoxin] + H2O. It carries out the reaction calciol + 2 reduced [adrenodoxin] + O2 + 2 H(+) = calcidiol + 2 oxidized [adrenodoxin] + H2O. The enzyme catalyses (25R)-5beta-cholestane-3alpha,7alpha,12alpha,26-tetrol + 2 reduced [adrenodoxin] + O2 + 2 H(+) = (25R)-3alpha,7alpha,12alpha-trihydroxy-5beta-cholestan-26-al + 2 oxidized [adrenodoxin] + 2 H2O. The catalysed reaction is 2 reduced [adrenodoxin] + cholesterol + O2 + 2 H(+) = (25R)-cholest-5-ene-3beta,26-diol + 2 oxidized [adrenodoxin] + H2O. It catalyses the reaction (25R)-3beta,4beta-dihydroxycholest-5-en-26-al + 2 reduced [adrenodoxin] + O2 + H(+) = (25R)-3beta,4beta-dihydroxycholest-5-en-26-oate + 2 oxidized [adrenodoxin] + H2O. It carries out the reaction (25R)-4beta,26-dihydroxycholesterol + 2 reduced [adrenodoxin] + O2 + 2 H(+) = (25R)-3beta,4beta-dihydroxycholest-5-en-26-al + 2 oxidized [adrenodoxin] + 2 H2O. The enzyme catalyses 4beta-hydroxycholesterol + 2 reduced [adrenodoxin] + O2 + 2 H(+) = (25R)-4beta,26-dihydroxycholesterol + 2 oxidized [adrenodoxin] + H2O. The catalysed reaction is (25R)-3beta-hydroxy-5-cholesten-26-al + 2 reduced [adrenodoxin] + O2 + H(+) = (25R)-3beta-hydroxy-5-cholestenoate + 2 oxidized [adrenodoxin] + H2O. It catalyses the reaction (25R)-cholest-5-ene-3beta,26-diol + 2 reduced [adrenodoxin] + O2 + 2 H(+) = (25R)-3beta-hydroxy-5-cholesten-26-al + 2 oxidized [adrenodoxin] + 2 H2O. It carries out the reaction (25R)-3alpha,7alpha,12alpha-trihydroxy-5beta-cholestan-26-al + 2 reduced [adrenodoxin] + O2 + H(+) = (25R)-3alpha,7alpha,12alpha-trihydroxy-5beta-cholestan-26-oate + 2 oxidized [adrenodoxin] + H2O. The enzyme catalyses 5beta-cholestane-3alpha,7alpha,12alpha-triol + 2 reduced [adrenodoxin] + O2 + 2 H(+) = (25R)-5beta-cholestane-3alpha,7alpha,12alpha,26-tetrol + 2 oxidized [adrenodoxin] + H2O. It participates in hormone biosynthesis; cholecalciferol biosynthesis. Its pathway is steroid metabolism; cholesterol degradation. It functions in the pathway lipid metabolism; bile acid biosynthesis. In terms of biological role, cytochrome P450 monooxygenase that catalyzes regio- and stereospecific hydroxylation of cholesterol and its derivatives. Hydroxylates (with R stereochemistry) the terminal methyl group of cholesterol side-chain in a three step reaction to yield at first a C26 alcohol, then a C26 aldehyde and finally a C26 acid. Regulates cholesterol homeostasis by catalyzing the conversion of excess cholesterol to bile acids via both the 'neutral' (classic) and the 'acid' (alternative) pathways. May also regulate cholesterol homeostasis via generation of active oxysterols, which act as ligands for NR1H2 and NR1H3 nuclear receptors, modulating the transcription of genes involved in lipid metabolism. Plays a role in cholestanol metabolism in the cerebellum. Similarly to cholesterol, hydroxylates cholestanol and may facilitate sterol diffusion through the blood-brain barrier to the systemic circulation for further degradation. Also hydroxylates retinal 7-ketocholesterol, a noxious oxysterol with pro-inflammatory and pro-apoptotic effects, and may play a role in its elimination from the retinal pigment epithelium. May play a redundant role in vitamin D biosynthesis. Catalyzes 25-hydroxylation of vitamin D3 that is required for its conversion to a functionally active form. The sequence is that of Sterol 26-hydroxylase, mitochondrial (Cyp27a1) from Rattus norvegicus (Rat).